A 614-amino-acid polypeptide reads, in one-letter code: UvrABC system protein C (614 aa).

One can recognise a GIY-YIG domain in the interval 25–103 (SVPGVYKMFG…IKSLKPKYNI (79 aa)). The UVR domain maps to 214-249 (KEIQCELFEMMCRFSNNQDYESAIVCRDRLHALKSM).

The protein belongs to the UvrC family. Interacts with UvrB in an incision complex.

It is found in the cytoplasm. The UvrABC repair system catalyzes the recognition and processing of DNA lesions. UvrC both incises the 5' and 3' sides of the lesion. The N-terminal half is responsible for the 3' incision and the C-terminal half is responsible for the 5' incision. This chain is UvrABC system protein C, found in Anaplasma phagocytophilum (strain HZ).